The sequence spans 155 residues: Ribosomal RNA large subunit methyltransferase H (155 aa).

Residues Leu-72, Gly-103, and 122–127 (LSPLTF) each bind S-adenosyl-L-methionine.

The protein belongs to the RNA methyltransferase RlmH family. As to quaternary structure, homodimer.

The protein resides in the cytoplasm. The catalysed reaction is pseudouridine(1915) in 23S rRNA + S-adenosyl-L-methionine = N(3)-methylpseudouridine(1915) in 23S rRNA + S-adenosyl-L-homocysteine + H(+). Functionally, specifically methylates the pseudouridine at position 1915 (m3Psi1915) in 23S rRNA. This is Ribosomal RNA large subunit methyltransferase H from Alkalilimnicola ehrlichii (strain ATCC BAA-1101 / DSM 17681 / MLHE-1).